The sequence spans 616 residues: ATP-dependent zinc metalloprotease FtsH 3 (616 aa).

Residues 1–9 are Cytoplasmic-facing; it reads MSKNNKKWR. A helical transmembrane segment spans residues 10–30; that stretch reads NAGLYALLLIVVLALASAFFD. At 31–108 the chain is on the lumenal side; the sequence is RPTQTRETLS…VQPQSDEGFW (78 aa). Residues 109–129 traverse the membrane as a helical segment; sequence FRIASTLFLPILLLVGIFFLF. Topologically, residues 130 to 616 are cytoplasmic; sequence RRAQSGPGSQ…NNNAKLALLV (487 aa). 201–208 provides a ligand contact to ATP; sequence GPPGTGKT. A Zn(2+)-binding site is contributed by His-423. Residue Glu-424 is part of the active site. Residues His-427 and Asp-504 each contribute to the Zn(2+) site.

In the central section; belongs to the AAA ATPase family. The protein in the C-terminal section; belongs to the peptidase M41 family. As to quaternary structure, homohexamer (Potential). Part of a large complex that includes FtsH2 and PSII. Coimmunoprecipitates with YidC. Zn(2+) is required as a cofactor.

It localises to the cellular thylakoid membrane. Functionally, acts as a processive, ATP-dependent zinc metallopeptidase for both cytoplasmic and membrane proteins. Plays a role in the quality control of integral membrane proteins. The chain is ATP-dependent zinc metalloprotease FtsH 3 from Synechocystis sp. (strain ATCC 27184 / PCC 6803 / Kazusa).